An 86-amino-acid chain; its full sequence is Omega-theraphotoxin-Hhn1f 2 (86 aa).

A signal peptide spans 1–21 (MKSIVFVALFGLALLAVVCSA). The propeptide occupies 22–50 (SEDAHKELLKEVVRAVVVDKTDAVQAEER). 3 disulfide bridges follow: C52–C66, C59–C71, and C65–C78.

This sequence belongs to the neurotoxin 10 (Hwtx-1) family. 17 (Hntx-9) subfamily. In terms of tissue distribution, expressed by the venom gland.

It localises to the secreted. Ion channel inhibitor. The protein is Omega-theraphotoxin-Hhn1f 2 of Cyriopagopus hainanus (Chinese bird spider).